The chain runs to 558 residues: Formate--tetrahydrofolate ligase (558 aa).

An ATP-binding site is contributed by 66–73; it reads TPAGEGKT.

Belongs to the formate--tetrahydrofolate ligase family.

The catalysed reaction is (6S)-5,6,7,8-tetrahydrofolate + formate + ATP = (6R)-10-formyltetrahydrofolate + ADP + phosphate. It functions in the pathway one-carbon metabolism; tetrahydrofolate interconversion. The chain is Formate--tetrahydrofolate ligase from Neisseria meningitidis serogroup C (strain 053442).